The sequence spans 314 residues: NF-kappa-B inhibitor alpha (314 aa).

Positions 1 to 39 (MFQPAGHGQDWAMEGPRDGLKKERLVDDRHDSGLDSMKD) are disordered. The segment covering 15–39 (GPRDGLKKERLVDDRHDSGLDSMKD) has biased composition (basic and acidic residues). Lys-21 participates in a covalent cross-link: Glycyl lysine isopeptide (Lys-Gly) (interchain with G-Cter in SUMO); alternate. Residue Lys-21 forms a Glycyl lysine isopeptide (Lys-Gly) (interchain with G-Cter in ubiquitin); alternate linkage. Lys-22 participates in a covalent cross-link: Glycyl lysine isopeptide (Lys-Gly) (interchain with G-Cter in ubiquitin). Residues 30–36 (HDSGLDS) carry the Destruction motif motif. At Ser-32 the chain carries Phosphoserine; by IKKA and IKKB. Ser-36 is modified (phosphoserine; by IKKA, IKKB, IKKE and TBK1). Tyr-42 carries the phosphotyrosine; by Tyr-kinases modification. Positions 45–54 (MVKELREIRL) match the Nuclear export signal motif. A Nuclear import signal motif is present at residues 110-120 (LQQTPLHLAVI). ANK repeat units follow at residues 110–139 (LQQT…DPEL), 143–172 (RGNT…PQHL), 182–211 (NGHT…DVNA), and 216–245 (NGRT…DVNR). Asn-210 and Asn-244 each carry (3S)-3-hydroxyasparagine; by HIF1AN. Residues Ser-283 and Ser-288 each carry the phosphoserine; by CK2 modification. Thr-291 carries the phosphothreonine; by CK2 modification. Position 293 is a phosphoserine; by CK2 (Ser-293). Thr-296 is subject to Phosphothreonine.

The protein belongs to the NF-kappa-B inhibitor family. In terms of assembly, interacts with RELA; the interaction requires the nuclear import signal. Part of a 70-90 kDa complex at least consisting of CHUK, IKBKB, NFKBIA, RELA, ELP1 and MAP3K14. Interacts with NKIRAS1 and NKIRAS2. Interacts with RWDD3; the interaction enhances sumoylation. Interacts with PRMT2. Interacts with PRKACA in platelets; this interaction is disrupted by thrombin and collagen. Interacts with MEFV. Interacts with DDRGK1; positively regulates NFKBIA phosphorylation and degradation. Interacts with HNRNPA2B1; the interaction may be mediated by the RRM2 domain of HNRNPA2B1, and HNRNPA2B1 may interact simultaneously with FAM76B and either NFKBIA or NFKBIE to form a complex. In terms of processing, phosphorylated at Ser-32 and Ser-36 by IKKA/CHUK and IKKB/IKBKB; disables inhibition of NF-kappa-B DNA-binding activity. Phosphorylation at positions 32 and 36 is prerequisite to recognition by the SCF(FBXW11) and SCF(BTRC) complexes, leading to polyubiquitination and subsequent degradation. Post-translationally, polyubiquitinated at Lys-21 and/or Lys-22 following phosphorylation at Ser-32 and Ser-36. Monoubiquitinated at Lys-21 and/or Lys-22 by UBE2D3. Ubiquitin chain elongation is then performed by CDC34 in cooperation with the SCF(FBXW11) E3 ligase complex, building ubiquitin chains from the UBE2D3-primed NFKBIA-linked ubiquitin. The resulting polyubiquitination leads to protein degradation. Also ubiquitinated by the SCF(BTRC) complex following stimulus-dependent phosphorylation at Ser-32 and Ser-36. Deubiquitinated by USP38, leading to NF-kappa-B inhibition. Sumoylated; sumoylation requires the presence of the nuclear import signal. Sumoylation blocks ubiquitination and proteasome-mediated degradation of the protein thereby increasing the protein stability. In terms of processing, hydroxylated by HIF1AN.

It localises to the cytoplasm. The protein localises to the nucleus. Functionally, inhibits the activity of dimeric NF-kappa-B/REL complexes by trapping REL (RELA/p65 and NFKB1/p50) dimers in the cytoplasm by masking their nuclear localization signals. On cellular stimulation by immune and pro-inflammatory responses, becomes phosphorylated promoting ubiquitination and degradation, enabling the dimeric RELA to translocate to the nucleus and activate transcription. The polypeptide is NF-kappa-B inhibitor alpha (Nfkbia) (Rattus norvegicus (Rat)).